Here is a 162-residue protein sequence, read N- to C-terminus: NADH-quinone oxidoreductase subunit I 2 (162 aa).

4Fe-4S ferredoxin-type domains lie at 53–83 (LRRY…IESE) and 93–122 (TRYD…ETRI). [4Fe-4S] cluster is bound by residues Cys-63, Cys-66, Cys-69, Cys-73, Cys-102, Cys-105, Cys-108, and Cys-112.

Belongs to the complex I 23 kDa subunit family. NDH-1 is composed of 14 different subunits. Subunits NuoA, H, J, K, L, M, N constitute the membrane sector of the complex. The cofactor is [4Fe-4S] cluster.

The protein resides in the cell inner membrane. The catalysed reaction is a quinone + NADH + 5 H(+)(in) = a quinol + NAD(+) + 4 H(+)(out). NDH-1 shuttles electrons from NADH, via FMN and iron-sulfur (Fe-S) centers, to quinones in the respiratory chain. The immediate electron acceptor for the enzyme in this species is believed to be ubiquinone. Couples the redox reaction to proton translocation (for every two electrons transferred, four hydrogen ions are translocated across the cytoplasmic membrane), and thus conserves the redox energy in a proton gradient. This Nitrosospira multiformis (strain ATCC 25196 / NCIMB 11849 / C 71) protein is NADH-quinone oxidoreductase subunit I 2.